We begin with the raw amino-acid sequence, 96 residues long: Large ribosomal subunit protein bL27 (96 aa).

The propeptide occupies 1-9 (MLRLDLQFF).

This sequence belongs to the bacterial ribosomal protein bL27 family. The N-terminus is cleaved by ribosomal processing cysteine protease Prp.

This Anoxybacillus flavithermus (strain DSM 21510 / WK1) protein is Large ribosomal subunit protein bL27.